A 527-amino-acid chain; its full sequence is Protein PyrBI (527 aa).

The interval 1–342 (MKRDFLGRTL…MFGGALEAPF (342 aa)) is aspartate carbamoyltransferase. A linker region spans residues 343–357 (DTSKKEEKPEEDFII). The tract at residues 368 to 527 (VQKEGKRGIK…PHSFEEIWSI (160 aa)) is aspartate carbamoyltransferase regulatory region. The Zn(2+) site is built by Cys-483, Cys-488, Cys-512, and Cys-515.

The protein in the N-terminal section; belongs to the aspartate/ornithine carbamoyltransferase superfamily. ATCase family. It in the C-terminal section; belongs to the PyrI family.

The enzyme catalyses carbamoyl phosphate + L-aspartate = N-carbamoyl-L-aspartate + phosphate + H(+). The protein operates within pyrimidine metabolism; UMP biosynthesis via de novo pathway; (S)-dihydroorotate from bicarbonate: step 2/3. The protein is Protein PyrBI (pyrBI) of Thermotoga maritima (strain ATCC 43589 / DSM 3109 / JCM 10099 / NBRC 100826 / MSB8).